Consider the following 551-residue polypeptide: Glucose-6-phosphate isomerase 2 (551 aa).

Residue glutamate 353 is the Proton donor of the active site. Catalysis depends on residues histidine 384 and lysine 512.

It belongs to the GPI family.

The protein resides in the cytoplasm. It catalyses the reaction alpha-D-glucose 6-phosphate = beta-D-fructose 6-phosphate. It functions in the pathway carbohydrate biosynthesis; gluconeogenesis. The protein operates within carbohydrate degradation; glycolysis; D-glyceraldehyde 3-phosphate and glycerone phosphate from D-glucose: step 2/4. In terms of biological role, catalyzes the reversible isomerization of glucose-6-phosphate to fructose-6-phosphate. The polypeptide is Glucose-6-phosphate isomerase 2 (Colwellia psychrerythraea (strain 34H / ATCC BAA-681) (Vibrio psychroerythus)).